The primary structure comprises 89 residues: Small ribosomal subunit protein uS15 (89 aa).

Belongs to the universal ribosomal protein uS15 family. As to quaternary structure, part of the 30S ribosomal subunit. Forms a bridge to the 50S subunit in the 70S ribosome, contacting the 23S rRNA.

Functionally, one of the primary rRNA binding proteins, it binds directly to 16S rRNA where it helps nucleate assembly of the platform of the 30S subunit by binding and bridging several RNA helices of the 16S rRNA. Its function is as follows. Forms an intersubunit bridge (bridge B4) with the 23S rRNA of the 50S subunit in the ribosome. The polypeptide is Small ribosomal subunit protein uS15 (Phocaeicola vulgatus (strain ATCC 8482 / DSM 1447 / JCM 5826 / CCUG 4940 / NBRC 14291 / NCTC 11154) (Bacteroides vulgatus)).